We begin with the raw amino-acid sequence, 569 residues long: Proline--tRNA ligase (569 aa).

The protein belongs to the class-II aminoacyl-tRNA synthetase family. ProS type 1 subfamily. Homodimer.

It is found in the cytoplasm. The enzyme catalyses tRNA(Pro) + L-proline + ATP = L-prolyl-tRNA(Pro) + AMP + diphosphate. In terms of biological role, catalyzes the attachment of proline to tRNA(Pro) in a two-step reaction: proline is first activated by ATP to form Pro-AMP and then transferred to the acceptor end of tRNA(Pro). As ProRS can inadvertently accommodate and process non-cognate amino acids such as alanine and cysteine, to avoid such errors it has two additional distinct editing activities against alanine. One activity is designated as 'pretransfer' editing and involves the tRNA(Pro)-independent hydrolysis of activated Ala-AMP. The other activity is designated 'posttransfer' editing and involves deacylation of mischarged Ala-tRNA(Pro). The misacylated Cys-tRNA(Pro) is not edited by ProRS. The sequence is that of Proline--tRNA ligase from Campylobacter hominis (strain ATCC BAA-381 / DSM 21671 / CCUG 45161 / LMG 19568 / NCTC 13146 / CH001A).